Here is a 510-residue protein sequence, read N- to C-terminus: JmjC domain-containing histone demethylation protein 1 (510 aa).

The PHD-type zinc finger occupies 2-53; sequence PNRCDFCTSSSTKDKQQWTQCDGCDRWVHDVCVSITDPVSYAKYHCPTCTKT. The 150-residue stretch at 216–365 folds into the JmjC domain; that stretch reads TLVRELDLVD…TQIDIAGIEV (150 aa). Substrate is bound at residue Thr-255. Residues His-258 and Asp-260 each coordinate Fe cation. Lys-275 contributes to the substrate binding site. His-333 lines the Fe cation pocket. Residues 475 to 510 form a disordered region; that stretch reads KGESKEKHKIESQLPEEKILQGSKLESKEEVQTENF. A compositionally biased stretch (basic and acidic residues) spans 477–510; the sequence is ESKEKHKIESQLPEEKILQGSKLESKEEVQTENF.

The protein belongs to the JHDM1 histone demethylase family. The cofactor is Fe(2+).

It is found in the nucleus. The enzyme catalyses N(6),N(6)-dimethyl-L-lysyl(36)-[histone H3] + 2 2-oxoglutarate + 2 O2 = L-lysyl(36)-[histone H3] + 2 formaldehyde + 2 succinate + 2 CO2. Histone demethylase that specifically demethylates 'Lys-36' of histone H3, thereby playing a central role in histone code. The polypeptide is JmjC domain-containing histone demethylation protein 1 (JHD1) (Yarrowia lipolytica (strain CLIB 122 / E 150) (Yeast)).